The following is an 88-amino-acid chain: Small ribosomal subunit protein uS15 (88 aa).

The protein belongs to the universal ribosomal protein uS15 family. As to quaternary structure, part of the 30S ribosomal subunit. Forms a bridge to the 50S subunit in the 70S ribosome, contacting the 23S rRNA.

In terms of biological role, one of the primary rRNA binding proteins, it binds directly to 16S rRNA where it helps nucleate assembly of the platform of the 30S subunit by binding and bridging several RNA helices of the 16S rRNA. Functionally, forms an intersubunit bridge (bridge B4) with the 23S rRNA of the 50S subunit in the ribosome. The polypeptide is Small ribosomal subunit protein uS15 (Borrelia turicatae (strain 91E135)).